The sequence spans 324 residues: NADH-ubiquinone oxidoreductase chain 1 (324 aa).

Helical transmembrane passes span 9–29 (ILNP…LTLL), 43–63 (PNIV…KLFI), 75–95 (ILFI…WAPL), 106–126 (LAIL…LGSG), 146–166 (ISYE…TGGF), 177–197 (SIWL…STLA), 228–250 (LFFL…LFLG), 259–279 (ELTT…FLWV), and 299–319 (FLPL…TFAG).

Belongs to the complex I subunit 1 family.

It is found in the mitochondrion inner membrane. It catalyses the reaction a ubiquinone + NADH + 5 H(+)(in) = a ubiquinol + NAD(+) + 4 H(+)(out). Its function is as follows. Core subunit of the mitochondrial membrane respiratory chain NADH dehydrogenase (Complex I) that is believed to belong to the minimal assembly required for catalysis. Complex I functions in the transfer of electrons from NADH to the respiratory chain. The immediate electron acceptor for the enzyme is believed to be ubiquinone. The chain is NADH-ubiquinone oxidoreductase chain 1 (MT-ND1) from Tetraodon nigroviridis (Spotted green pufferfish).